Consider the following 198-residue polypeptide: Myc target protein 1 homolog (198 aa).

Residues 52–72 carry the Bipartite nuclear localization signal motif; sequence RRRASASISPRMPKSSSRRPR. Disordered regions lie at residues 58–83 and 172–198; these read SISP…LNRS and NNSL…FPDS. Over residues 172-181 the composition is skewed to polar residues; sequence NNSLRLGPST.

It belongs to the MYCT1 family.

Its subcellular location is the nucleus. Functionally, may regulate certain MYC target genes, MYC seems to be a direct upstream transcriptional activator. This Xenopus tropicalis (Western clawed frog) protein is Myc target protein 1 homolog (myct1).